The following is a 359-amino-acid chain: Phospho-N-acetylmuramoyl-pentapeptide-transferase (359 aa).

The next 10 membrane-spanning stretches (helical) occupy residues 3 to 23 (QILVAVTVALVVSILLTPALI), 55 to 75 (VAIVAGIWAGYLGTHLAGLAF), 80 to 100 (VSASGVLVLGLATALGGVGFL), 117 to 137 (TAKTVGQITAAVLFGVLVLQF), 156 to 176 (IATVTLAPALFVLFCMVIVSA), 187 to 207 (LDGLAAGSMAMVTAAYVLITF), 231 to 251 (LTLIAAATVGACIGFLWWNAA), 255 to 275 (IFMGDTGSLALGGVIAGLSVT), 280 to 300 (ILAVVLGSLFVAEITSVVLQI), and 334 to 354 (FWLLTAIACGLGVVLFYGEWL).

The protein belongs to the glycosyltransferase 4 family. MraY subfamily. It depends on Mg(2+) as a cofactor.

The protein resides in the cell membrane. The catalysed reaction is UDP-N-acetyl-alpha-D-muramoyl-L-alanyl-gamma-D-glutamyl-meso-2,6-diaminopimeloyl-D-alanyl-D-alanine + di-trans,octa-cis-undecaprenyl phosphate = di-trans,octa-cis-undecaprenyl diphospho-N-acetyl-alpha-D-muramoyl-L-alanyl-D-glutamyl-meso-2,6-diaminopimeloyl-D-alanyl-D-alanine + UMP. It functions in the pathway cell wall biogenesis; peptidoglycan biosynthesis. Its function is as follows. Catalyzes the initial step of the lipid cycle reactions in the biosynthesis of the cell wall peptidoglycan: transfers peptidoglycan precursor phospho-MurNAc-pentapeptide from UDP-MurNAc-pentapeptide onto the lipid carrier undecaprenyl phosphate, yielding undecaprenyl-pyrophosphoryl-MurNAc-pentapeptide, known as lipid I. The polypeptide is Phospho-N-acetylmuramoyl-pentapeptide-transferase (Mycobacterium leprae (strain TN)).